Here is a 299-residue protein sequence, read N- to C-terminus: Ankyrin repeat domain-containing protein 54 (299 aa).

Residues 1 to 32 are disordered; the sequence is MAAAAGGADDESRSGRSSSDGECAVAPEPLTG. Residue A2 is modified to N-acetylalanine. Phosphoserine is present on residues S57 and S62. The Nuclear localization signal (NLS) signature appears at 98–116; that stretch reads RRLGPTGKEVHALKRLRDS. 4 ANK repeats span residues 108–137, 141–170, 174–203, and 207–239; these read HALKRLRDSANANDVETVQQLLEEGTDPCA, KGRTALHFASCNGNDQIVQLLLDHGADPNQ, LGNTPLHLAACTNHAPVITTLLRGGARVDA, and AGRTPLHLAKSKLNILQEGHSQCLEAVRLEVKQ. Residues 140 to 240 are LYN-binding; it reads DKGRTALHFA…EAVRLEVKQI (101 aa). A Nuclear export signal (NES) motif is present at residues 282 to 292; sequence LLASFTSLSLQ.

In terms of assembly, interacts (via ankyrin repeat region) with LYN (via SH3-domain) in an activation-independent status of LYN. Forms a multiprotein complex with LYN and HCLS1. Interacts with TSN2, VAV1, DBNL and LASP1.

It localises to the nucleus. The protein resides in the cytoplasm. The protein localises to the midbody. Its function is as follows. Plays an important role in regulating intracellular signaling events associated with erythroid terminal differentiation. In Bos taurus (Bovine), this protein is Ankyrin repeat domain-containing protein 54 (ANKRD54).